The following is a 321-amino-acid chain: Large ribosomal subunit protein uL10 (321 aa).

The tract at residues 284 to 321 (SAGTAPTGGGAAAAAVEEKKEEPEEESDDDIGFSLFDD) is disordered. The span at 306 to 321 (PEEESDDDIGFSLFDD) shows a compositional bias: acidic residues.

It belongs to the universal ribosomal protein uL10 family. P0 forms a pentameric complex by interaction with dimers of P1 and P2. Phosphorylated.

Ribosomal protein P0 is the functional equivalent of E.coli protein L10. This is Large ribosomal subunit protein uL10 from Oxybasis rubra (Red goosefoot).